Consider the following 553-residue polypeptide: Phosphoglucomutase (553 aa).

The disordered stretch occupies residues 1 to 24 (MQATVKRYPTTPISGQTMGTSGLR). Polar residues predominate over residues 11-20 (TPISGQTMGT). Substrate is bound by residues threonine 20, arginine 24, 117–118 (SH), and lysine 131. Serine 117 functions as the Phosphoserine intermediate in the catalytic mechanism. Residue serine 117 coordinates Mg(2+). Aspartate 289, aspartate 291, and aspartate 293 together coordinate Mg(2+). Residues 293–294 (DR), threonine 352, 371–373 (EES), lysine 384, and arginine 509 contribute to the substrate site.

Belongs to the phosphohexose mutase family. It depends on Mg(2+) as a cofactor.

The protein resides in the cytoplasm. It catalyses the reaction alpha-D-glucose 1-phosphate = alpha-D-glucose 6-phosphate. Its function is as follows. This enzyme participates in both the breakdown and synthesis of glucose. The polypeptide is Phosphoglucomutase (pgm) (Entamoeba dispar).